The primary structure comprises 665 residues: Cinnamate reductase (665 aa).

Gln-109 contacts FMN. The active-site Proton donor is Tyr-182. FMN-binding positions include Arg-230, Arg-319, and 341–342; that span reads GR. [4Fe-4S] cluster-binding residues include Cys-365, Cys-368, Cys-372, and Cys-384. The FAD site is built by Ala-415, Glu-434, Asn-442, Lys-452, and Ala-479.

This sequence in the N-terminal section; belongs to the NADH:flavin oxidoreductase/NADH oxidase family. FMN is required as a cofactor. Requires FAD as cofactor. The cofactor is [4Fe-4S] cluster.

It catalyses the reaction 3-phenylpropanoate + NAD(+) = (E)-cinnamate + NADH + H(+). It functions in the pathway amino-acid degradation; L-phenylalanine degradation. Functionally, involved in the fermentation of L-phenylalanine via a Stickland reaction. Catalyzes the reduction of (E)-cinnamate to yield 3-phenylpropionate. The chain is Cinnamate reductase from Clostridium sporogenes (strain ATCC 7955 / DSM 767 / NBRC 16411 / NCIMB 8053 / NCTC 8594 / PA 3679).